The primary structure comprises 545 residues: Chaperonin GroEL (545 aa).

ATP is bound by residues 29 to 32 (TLGP), Lys50, 86 to 90 (DGTTT), Gly413, and Asp495.

This sequence belongs to the chaperonin (HSP60) family. As to quaternary structure, forms a cylinder of 14 subunits composed of two heptameric rings stacked back-to-back. Interacts with the co-chaperonin GroES.

It localises to the cytoplasm. It carries out the reaction ATP + H2O + a folded polypeptide = ADP + phosphate + an unfolded polypeptide.. In terms of biological role, together with its co-chaperonin GroES, plays an essential role in assisting protein folding. The GroEL-GroES system forms a nano-cage that allows encapsulation of the non-native substrate proteins and provides a physical environment optimized to promote and accelerate protein folding. This Borreliella afzelii (strain PKo) (Borrelia afzelii) protein is Chaperonin GroEL.